The chain runs to 481 residues: ADAMTS-like protein 5 (481 aa).

The first 42 residues, 1 to 42 (MGKLRPGRVEWLASGHTERPHLFQNLLLFLWALLNCGLGVSA), serve as a signal peptide directing secretion. In terms of domain architecture, TSP type-1 spans 45–97 (PGEWTPWVSWTRCSSSCGRGVSVRSRRCLRLPGEEPCWGDSHEYRLCQLPDCP). 3 cysteine pairs are disulfide-bonded: Cys-57–Cys-91, Cys-61–Cys-96, and Cys-72–Cys-81. The N-linked (GlcNAc...) asparagine glycan is linked to Asn-218. A disordered region spans residues 331 to 361 (QPQPRGVEPQPPAAPAVTPAQTPTLAPDPCP). Residues 345–355 (PAVTPAQTPTL) are compositionally biased toward low complexity. 3 disulfide bridges follow: Cys-360–Cys-425, Cys-363–Cys-427, and Cys-377–Cys-479. The NTR domain maps to 360-479 (CPPCPDTRGR…SRIRLTARRC (120 aa)).

Interacts with heparin, FBN1 and FBN2. In terms of processing, proteolytically cleaved to release a C-terminal fragment containing the NTR domain. Post-translationally, contains at least one additional N-linked glycosylation site.

The protein resides in the secreted. Its subcellular location is the extracellular space. It is found in the extracellular matrix. May play a role in modulation of fibrillin microfibrils in the extracellular matrix (ECM). This is ADAMTS-like protein 5 (ADAMTSL5) from Homo sapiens (Human).